A 267-amino-acid chain; its full sequence is 2-keto-3-deoxy-L-rhamnonate aldolase (267 aa).

The active-site Proton acceptor is His-49. Gln-151 serves as a coordination point for substrate. Mg(2+) is bound at residue Glu-153. The substrate site is built by Ala-178 and Asp-179. Residue Asp-179 participates in Mg(2+) binding.

It belongs to the HpcH/HpaI aldolase family. KDR aldolase subfamily. Homohexamer. Requires Mg(2+) as cofactor.

The catalysed reaction is 2-dehydro-3-deoxy-L-rhamnonate = (S)-lactaldehyde + pyruvate. Catalyzes the reversible retro-aldol cleavage of 2-keto-3-deoxy-L-rhamnonate (KDR) to pyruvate and lactaldehyde. The protein is 2-keto-3-deoxy-L-rhamnonate aldolase of Salmonella typhi.